Here is a 257-residue protein sequence, read N- to C-terminus: Putative phosphatase YkrA (257 aa).

Asp9 serves as the catalytic Nucleophile. Mg(2+) is bound at residue Asp9. Residue Ile10 participates in phosphate binding. Mg(2+) is bound at residue Asp11. Phosphate contacts are provided by residues 43–44 (SG) and Lys183. Asp206 is a binding site for Mg(2+). Asn209 is a phosphate binding site.

This sequence belongs to the HAD-like hydrolase superfamily. Cof family. Mg(2+) is required as a cofactor.

The protein is Putative phosphatase YkrA (ykrA) of Bacillus subtilis (strain 168).